The primary structure comprises 231 residues: GFP-like fluorescent chromoprotein FP538 (231 aa).

The residue at position 65 (Phe65) is a Phenylalanine amide; atypical. The segment at residues 66 to 68 (KYG) is a cross-link (2-tetrahydro-2-pyridyl-5-imidazolinone (Lys-Gly)). Tyr67 carries the post-translational modification 2,3-didehydrotyrosine.

It belongs to the GFP family. Homotetramer. Post-translationally, contains a chromophore consisting of modified amino acid residues. The chromophore is formed by autocatalytic backbone condensation between Xaa-N and Gly-(N+2), and oxidation of Tyr-(N+1) to didehydrotyrosine. In addition, the residue N lysine undergoes cyclization. The alpha-amino nitrogen is replaced by the epsilon-amino nitrogen, the peptide chain is broken, residue N-1 is released as an amide, and a double bond is formed between the alpha-carbon and the nitrogen so that a tetrahydropyridine ring results. Maturation of the chromophore requires nothing other than molecular oxygen. Tentacle and oral disk.

In terms of biological role, pigment protein that is yellow in color. In Zoanthus sp. (Green polyp), this protein is GFP-like fluorescent chromoprotein FP538.